Here is a 262-residue protein sequence, read N- to C-terminus: Putative hydro-lyase RHA1_ro03475 (262 aa).

This sequence belongs to the D-glutamate cyclase family.

The sequence is that of Putative hydro-lyase RHA1_ro03475 from Rhodococcus jostii (strain RHA1).